Consider the following 71-residue polypeptide: Long neurotoxin 3 (71 aa).

Intrachain disulfides connect cysteine 3/cysteine 20, cysteine 14/cysteine 41, cysteine 26/cysteine 30, cysteine 45/cysteine 56, and cysteine 57/cysteine 62.

Belongs to the three-finger toxin family. Long-chain subfamily. Type II alpha-neurotoxin sub-subfamily. As to expression, expressed by the venom gland.

The protein resides in the secreted. In terms of biological role, binds with high affinity to muscular (alpha-1/CHRNA1) and neuronal (alpha-7/CHRNA7) nicotinic acetylcholine receptor (nAChR) and inhibits acetylcholine from binding to the receptor, thereby impairing neuromuscular and neuronal transmission. The chain is Long neurotoxin 3 from Naja naja (Indian cobra).